The sequence spans 353 residues: Quinolinate synthase (353 aa).

Residues H49 and S70 each coordinate iminosuccinate. C115 provides a ligand contact to [4Fe-4S] cluster. Iminosuccinate-binding positions include 141–143 (YAN) and S158. C202 contributes to the [4Fe-4S] cluster binding site. Residues 228-230 (HPE) and T245 contribute to the iminosuccinate site. C299 is a binding site for [4Fe-4S] cluster.

Belongs to the quinolinate synthase family. Type 1 subfamily. It depends on [4Fe-4S] cluster as a cofactor.

It localises to the cytoplasm. It carries out the reaction iminosuccinate + dihydroxyacetone phosphate = quinolinate + phosphate + 2 H2O + H(+). The protein operates within cofactor biosynthesis; NAD(+) biosynthesis; quinolinate from iminoaspartate: step 1/1. Functionally, catalyzes the condensation of iminoaspartate with dihydroxyacetone phosphate to form quinolinate. In Marinobacter nauticus (strain ATCC 700491 / DSM 11845 / VT8) (Marinobacter aquaeolei), this protein is Quinolinate synthase.